A 154-amino-acid chain; its full sequence is MNDKAKSILDIRQILGLLPHRYPFLLVDRVLDYTPGECITAVKNVTMNEPFFQGHFPDVPVMPGVLIMEALAQAGGILVVKSTDTSVEGKLFLFTGMERVRFRKPVYPGDRLELHCRLLRHKLKLWKMEGKAYVDGQLAAEAEMTAAVMNREDM.

Residue His-55 is part of the active site.

This sequence belongs to the thioester dehydratase family. FabZ subfamily.

The protein localises to the cytoplasm. The catalysed reaction is a (3R)-hydroxyacyl-[ACP] = a (2E)-enoyl-[ACP] + H2O. Its function is as follows. Involved in unsaturated fatty acids biosynthesis. Catalyzes the dehydration of short chain beta-hydroxyacyl-ACPs and long chain saturated and unsaturated beta-hydroxyacyl-ACPs. The sequence is that of 3-hydroxyacyl-[acyl-carrier-protein] dehydratase FabZ from Oleidesulfovibrio alaskensis (strain ATCC BAA-1058 / DSM 17464 / G20) (Desulfovibrio alaskensis).